The chain runs to 610 residues: UvrABC system protein C (610 aa).

In terms of domain architecture, GIY-YIG spans 16-94 (SQPGVYRMYD…IKLYQPRYNV (79 aa)). The 36-residue stretch at 204-239 (DQVLTQLISRMETASQNLEFEEAARIRDQIQAVRRV) folds into the UVR domain.

Belongs to the UvrC family. In terms of assembly, interacts with UvrB in an incision complex.

It is found in the cytoplasm. The UvrABC repair system catalyzes the recognition and processing of DNA lesions. UvrC both incises the 5' and 3' sides of the lesion. The N-terminal half is responsible for the 3' incision and the C-terminal half is responsible for the 5' incision. In Shigella boydii serotype 18 (strain CDC 3083-94 / BS512), this protein is UvrABC system protein C.